Reading from the N-terminus, the 303-residue chain is Acetyl-coenzyme A carboxylase carboxyl transferase subunit beta (303 aa).

The 270-residue stretch at 25–294 (LWIKCPETGE…NDVSAKSLNG (270 aa)) folds into the CoA carboxyltransferase N-terminal domain.

The protein belongs to the AccD/PCCB family. Acetyl-CoA carboxylase is a heterohexamer composed of biotin carboxyl carrier protein (AccB), biotin carboxylase (AccC) and two subunits each of ACCase subunit alpha (AccA) and ACCase subunit beta (AccD).

The protein resides in the cytoplasm. It catalyses the reaction N(6)-carboxybiotinyl-L-lysyl-[protein] + acetyl-CoA = N(6)-biotinyl-L-lysyl-[protein] + malonyl-CoA. Its pathway is lipid metabolism; malonyl-CoA biosynthesis; malonyl-CoA from acetyl-CoA: step 1/1. Functionally, component of the acetyl coenzyme A carboxylase (ACC) complex. Biotin carboxylase (BC) catalyzes the carboxylation of biotin on its carrier protein (BCCP) and then the CO(2) group is transferred by the transcarboxylase to acetyl-CoA to form malonyl-CoA. This Rhizobium rhizogenes (strain K84 / ATCC BAA-868) (Agrobacterium radiobacter) protein is Acetyl-coenzyme A carboxylase carboxyl transferase subunit beta.